The primary structure comprises 364 residues: Fructose-bisphosphate aldolase B (364 aa).

Ala2 bears the N-acetylalanine mark. An N6-succinyllysine modification is found at Lys13. Ser36 carries the post-translational modification Phosphoserine. Thr39 is subject to Phosphothreonine. Beta-D-fructose 1,6-bisphosphate is bound at residue Arg43. Position 89 is a phosphoserine (Ser89). Phosphothreonine is present on Thr119. Lys121 is modified (N6-succinyllysine). Ser132 carries the phosphoserine modification. Glu188 functions as the Proton acceptor in the catalytic mechanism. Lys230 acts as the Schiff-base intermediate with dihydroxyacetone-P in catalysis. A phosphoserine mark is found at Ser272, Ser276, Ser299, and Ser301. 272 to 274 contacts beta-D-fructose 1,6-bisphosphate; sequence SGG. Arg304 serves as a coordination point for beta-D-fructose 1,6-bisphosphate. Ser309 is subject to Phosphoserine. At Lys317 the chain carries N6-succinyllysine.

This sequence belongs to the class I fructose-bisphosphate aldolase family. As to quaternary structure, homotetramer. Interacts with BBS1, BBS2, BBS4 and BBS7. Forms a ternary complex with G6PD and TP53; this interaction is direct.

Its subcellular location is the cytoplasm. It localises to the cytosol. It is found in the cytoskeleton. The protein resides in the microtubule organizing center. The protein localises to the centrosome. Its subcellular location is the centriolar satellite. The enzyme catalyses beta-D-fructose 1,6-bisphosphate = D-glyceraldehyde 3-phosphate + dihydroxyacetone phosphate. The catalysed reaction is beta-D-fructose 1-phosphate = D-glyceraldehyde + dihydroxyacetone phosphate. It participates in carbohydrate degradation; glycolysis; D-glyceraldehyde 3-phosphate and glycerone phosphate from D-glucose: step 4/4. It functions in the pathway carbohydrate biosynthesis; gluconeogenesis. The protein operates within carbohydrate metabolism; fructose metabolism. Its function is as follows. Catalyzes the aldol cleavage of fructose 1,6-biphosphate to form two triosephosphates dihydroxyacetone phosphate and D-glyceraldehyde 3-phosphate in glycolysis as well as the reverse stereospecific aldol addition reaction in gluconeogenesis. In fructolysis, metabolizes fructose 1-phosphate derived from the phosphorylation of dietary fructose by fructokinase into dihydroxyacetone phosphate and D-glyceraldehyde. Acts as an adapter independently of its enzymatic activity, exerts a tumor suppressor role by stabilizing the ternary complex with G6PD and TP53 to inhibit G6PD activity and keep oxidative pentose phosphate metabolism in check. This is Fructose-bisphosphate aldolase B from Homo sapiens (Human).